The sequence spans 415 residues: MGRRPQLRLVKALLLLGLNPVSTSLQDQRCENLSLTSNVSGLQCNASVDLIGTCWPRSPAGQLVVRPCPAFFYGVRYNTTNNGYRECLANGSWAARVNYSECQEILNEEKKSKVHYHVAVIINYLGHCISLVALLVAFVLFLRLRSIRCLRNIIHWNLISAFILRNATWFVVQLTVSPEVHQSNVAWCRLVTAAYNYFHVTNFFWMFGEGCYLHTAIVLTYSTDRLRKWMFVCIGWGVPFPIIVAWAIGKLHYDNEKCWFGKRPGVYTDYIYQGPMILVLLINFIFLFNIVRILMTKLRASTTSETIQYRKAVKATLVLLPLLGITYMLFFVNPGEDEVSRVVFIYFNSFLESFQGFFVSVFYCFLNSEVRSAIRKRWRRWQDKHSIRARVARAMSIPTSPTRVSFHSIKQSTAV.

A signal peptide spans M1–T23. The Extracellular segment spans residues S24–K111. 3 disulfides stabilise this stretch: C30/C54, C44/C87, and C68/C102. N-linked (GlcNAc...) asparagine glycosylation is found at N38, N45, N78, N90, and N98. The tract at residues Y99–E108 is important for peptide agonist binding. A helical membrane pass occupies residues S112–L142. Residues R143–C149 lie on the Cytoplasmic side of the membrane. A helical membrane pass occupies residues L150–L174. Topologically, residues T175–R189 are extracellular. An intrachain disulfide couples C188 to C258. Residues L190–V218 form a helical membrane-spanning segment. The Cytoplasmic segment spans residues L219 to R225. The chain crosses the membrane as a helical span at residues L226 to Y253. Over D254 to D269 the chain is Extracellular. The helical transmembrane segment at Y270–M295 threads the bilayer. The interval L280–I290 is important for antagonist binding. Residues T296–T306 lie on the Cytoplasmic side of the membrane. S301 bears the Phosphoserine; by PKA mark. Residues I307–F331 traverse the membrane as a helical segment. Topologically, residues V332–E338 are extracellular. The chain crosses the membrane as a helical span at residues V339–S368. The Cytoplasmic portion of the chain corresponds to E369–V415.

The protein belongs to the G-protein coupled receptor 2 family. In terms of assembly, interacts (via N-terminal extracellular domain) with CRH and UCN. Interacts with DLG1; this inhibits endocytosis of CRHR1 after agonist binding. Heterodimer; heterodimerizes with GPER1. Post-translationally, C-terminal Ser or Thr residues may be phosphorylated. In terms of processing, phosphorylation at Ser-301 by PKA prevents maximal coupling to Gq-protein, and thereby negatively regulates downstream signaling. In terms of tissue distribution, detected in brain, especially in cerebellum. Detected in pituitary gland, and at lower levels in the olfactory bulb.

The protein localises to the cell membrane. The protein resides in the endosome. G-protein coupled receptor for CRH (corticotropin-releasing factor) and UCN (urocortin). Has high affinity for CRH and UCN. Ligand binding causes a conformation change that triggers signaling via guanine nucleotide-binding proteins (G proteins) and down-stream effectors, such as adenylate cyclase. Promotes the activation of adenylate cyclase, leading to increased intracellular cAMP levels. Inhibits the activity of the calcium channel CACNA1H. Required for normal embryonic development of the adrenal gland and for normal hormonal responses to stress. Plays a role in the response to anxiogenic stimuli. The sequence is that of Corticotropin-releasing factor receptor 1 (Crhr1) from Rattus norvegicus (Rat).